Reading from the N-terminus, the 173-residue chain is Cytochrome c-type biogenesis protein CcmE (173 aa).

Topologically, residues 1 to 7 (MTRKSRR) are cytoplasmic. The chain crosses the membrane as a helical; Signal-anchor for type II membrane protein span at residues 8–28 (LILIAACGAVLALALGLILSA). The Periplasmic segment spans residues 29-173 (MSGSIVFFRS…DATLGQRSER (145 aa)). The heme site is built by histidine 122 and tyrosine 126. Residues 134 to 173 (ALKAQGRWQEGGGKDASKAAPKDAAKPETADATLGQRSER) form a disordered region. Basic and acidic residues predominate over residues 145-162 (GGKDASKAAPKDAAKPET).

Belongs to the CcmE/CycJ family.

It localises to the cell inner membrane. Heme chaperone required for the biogenesis of c-type cytochromes. Transiently binds heme delivered by CcmC and transfers the heme to apo-cytochromes in a process facilitated by CcmF and CcmH. The chain is Cytochrome c-type biogenesis protein CcmE from Methylorubrum extorquens (strain CM4 / NCIMB 13688) (Methylobacterium extorquens).